The following is a 372-amino-acid chain: N-methyl-L-tryptophan oxidase (372 aa).

Position 4–34 (4–34 (DLIIIGSGSVGAAAGYYATRAGLNVLMTDAH)) interacts with FAD. An S-8alpha-FAD cysteine modification is found at cysteine 308.

The protein belongs to the MSOX/MTOX family. MTOX subfamily. Monomer. The cofactor is FAD.

The catalysed reaction is N(alpha)-methyl-L-tryptophan + O2 + H2O = L-tryptophan + formaldehyde + H2O2. Functionally, catalyzes the oxidative demethylation of N-methyl-L-tryptophan. This is N-methyl-L-tryptophan oxidase from Escherichia coli O1:K1 / APEC.